The following is a 504-amino-acid chain: Cholesterol 7-alpha-monooxygenase (504 aa).

Cys-444 serves as a coordination point for heme.

Belongs to the cytochrome P450 family. The cofactor is heme.

The protein resides in the endoplasmic reticulum membrane. Its subcellular location is the microsome membrane. The catalysed reaction is cholesterol + reduced [NADPH--hemoprotein reductase] + O2 = 7alpha-hydroxycholesterol + oxidized [NADPH--hemoprotein reductase] + H2O + H(+). It participates in lipid metabolism; bile acid biosynthesis. Its function is as follows. Catalyzes a rate-limiting step in cholesterol catabolism and bile acid biosynthesis by introducing a hydrophilic moiety at position 7 of cholesterol. Important for cholesterol homeostasis. The sequence is that of Cholesterol 7-alpha-monooxygenase (CYP7A1) from Cricetulus griseus (Chinese hamster).